A 286-amino-acid polypeptide reads, in one-letter code: Shikimate dehydrogenase (NADP(+)) (286 aa).

Shikimate-binding positions include 19-21 (SLS) and T66. The Proton acceptor role is filled by K70. Shikimate contacts are provided by N91 and D107. NADP(+)-binding positions include 129–133 (GSGGA) and L229. Y231 contributes to the shikimate binding site. G252 contacts NADP(+).

It belongs to the shikimate dehydrogenase family. As to quaternary structure, homodimer.

The enzyme catalyses shikimate + NADP(+) = 3-dehydroshikimate + NADPH + H(+). The protein operates within metabolic intermediate biosynthesis; chorismate biosynthesis; chorismate from D-erythrose 4-phosphate and phosphoenolpyruvate: step 4/7. In terms of biological role, involved in the biosynthesis of the chorismate, which leads to the biosynthesis of aromatic amino acids. Catalyzes the reversible NADPH linked reduction of 3-dehydroshikimate (DHSA) to yield shikimate (SA). In Prochlorococcus marinus (strain MIT 9215), this protein is Shikimate dehydrogenase (NADP(+)).